We begin with the raw amino-acid sequence, 253 residues long: Imidazole glycerol phosphate synthase subunit HisF (253 aa).

Catalysis depends on residues Asp-11 and Asp-130.

This sequence belongs to the HisA/HisF family. Heterodimer of HisH and HisF.

The protein localises to the cytoplasm. The enzyme catalyses 5-[(5-phospho-1-deoxy-D-ribulos-1-ylimino)methylamino]-1-(5-phospho-beta-D-ribosyl)imidazole-4-carboxamide + L-glutamine = D-erythro-1-(imidazol-4-yl)glycerol 3-phosphate + 5-amino-1-(5-phospho-beta-D-ribosyl)imidazole-4-carboxamide + L-glutamate + H(+). It functions in the pathway amino-acid biosynthesis; L-histidine biosynthesis; L-histidine from 5-phospho-alpha-D-ribose 1-diphosphate: step 5/9. Functionally, IGPS catalyzes the conversion of PRFAR and glutamine to IGP, AICAR and glutamate. The HisF subunit catalyzes the cyclization activity that produces IGP and AICAR from PRFAR using the ammonia provided by the HisH subunit. This Acidobacterium capsulatum (strain ATCC 51196 / DSM 11244 / BCRC 80197 / JCM 7670 / NBRC 15755 / NCIMB 13165 / 161) protein is Imidazole glycerol phosphate synthase subunit HisF.